The following is a 302-amino-acid chain: Ornithine carbamoyltransferase (302 aa).

Carbamoyl phosphate contacts are provided by residues 52–55 (STRT), glutamine 79, arginine 103, and 130–133 (HPCQ). L-ornithine is bound by residues asparagine 161, aspartate 222, and 226 to 227 (SM). Carbamoyl phosphate contacts are provided by residues 262-263 (CL) and arginine 290.

The protein belongs to the aspartate/ornithine carbamoyltransferase superfamily. OTCase family.

The protein resides in the cytoplasm. It carries out the reaction carbamoyl phosphate + L-ornithine = L-citrulline + phosphate + H(+). It participates in amino-acid biosynthesis; L-arginine biosynthesis; L-arginine from L-ornithine and carbamoyl phosphate: step 1/3. Its function is as follows. Reversibly catalyzes the transfer of the carbamoyl group from carbamoyl phosphate (CP) to the N(epsilon) atom of ornithine (ORN) to produce L-citrulline. In Syntrophus aciditrophicus (strain SB), this protein is Ornithine carbamoyltransferase.